The sequence spans 319 residues: Forkhead box protein B1 (319 aa).

The segment at residues lysine 13–lysine 107 is a DNA-binding region (fork-head). A disordered region spans residues leucine 278 to serine 310. Residues serine 279–threonine 305 show a composition bias toward low complexity.

In terms of tissue distribution, in early gastrulae, expressed in the inner layer of the posterior dorsal ectoderm and in non-involuted mesoderm. By the mid-gastrula stage, expressed solely in the posterior ectoderm. At the end of gastrulation, expressed in ectodermal regions fated to become diencephalon, midbrain and hindbrain, and weakly expressed in regions fated to become spinal cord and tailbud. At the neurula stage, expressed in the midbrain and posterior forebrain (diencephalon) but not in the more anterior forebrain (telencephalon). Also expressed posteriorly in rhombomere 5. At tailbud stages, expression remains in the anterior brain and is also detectable along the length of the central nervous system and in the tailbud.

It localises to the nucleus. Functionally, probable transcription factor. May be involved in the early anteroposterior patterning of the neuroectoderm. The protein is Forkhead box protein B1 of Xenopus laevis (African clawed frog).